A 117-amino-acid chain; its full sequence is Large ribosomal subunit protein bL20c (117 aa).

It belongs to the bacterial ribosomal protein bL20 family.

The protein localises to the plastid. It is found in the chloroplast. Its function is as follows. Binds directly to 23S ribosomal RNA and is necessary for the in vitro assembly process of the 50S ribosomal subunit. It is not involved in the protein synthesizing functions of that subunit. The sequence is that of Large ribosomal subunit protein bL20c from Buxus microphylla (Littleleaf boxwood).